The primary structure comprises 481 residues: tRNA-2-methylthio-N(6)-dimethylallyladenosine synthase (481 aa).

One can recognise an MTTase N-terminal domain in the interval 24–140 (KKLFIESYGC…LPNLLNEVEE (117 aa)). [4Fe-4S] cluster contacts are provided by Cys33, Cys69, Cys103, Cys178, Cys182, and Cys185. Residues 164–411 (MSNGITALVA…DLQQKHAWWR (248 aa)) enclose the Radical SAM core domain. The 64-residue stretch at 413-476 (EDFIGQTVEV…SGTLKGEAVG (64 aa)) folds into the TRAM domain.

This sequence belongs to the methylthiotransferase family. MiaB subfamily. Monomer. The cofactor is [4Fe-4S] cluster.

The protein resides in the cytoplasm. It carries out the reaction N(6)-dimethylallyladenosine(37) in tRNA + (sulfur carrier)-SH + AH2 + 2 S-adenosyl-L-methionine = 2-methylsulfanyl-N(6)-dimethylallyladenosine(37) in tRNA + (sulfur carrier)-H + 5'-deoxyadenosine + L-methionine + A + S-adenosyl-L-homocysteine + 2 H(+). In terms of biological role, catalyzes the methylthiolation of N6-(dimethylallyl)adenosine (i(6)A), leading to the formation of 2-methylthio-N6-(dimethylallyl)adenosine (ms(2)i(6)A) at position 37 in tRNAs that read codons beginning with uridine. The chain is tRNA-2-methylthio-N(6)-dimethylallyladenosine synthase from Flavobacterium psychrophilum (strain ATCC 49511 / DSM 21280 / CIP 103535 / JIP02/86).